Here is a 319-residue protein sequence, read N- to C-terminus: Phosphoenolpyruvate transferase (319 aa).

Position 50 (D50) interacts with 7,8-didemethyl-8-hydroxy-5-deazariboflavin.

Belongs to the CofD family. As to quaternary structure, homodimer. Mg(2+) is required as a cofactor.

It catalyses the reaction enolpyruvoyl-2-diphospho-5'-guanosine + 7,8-didemethyl-8-hydroxy-5-deazariboflavin = dehydro coenzyme F420-0 + GMP + H(+). Its pathway is cofactor biosynthesis; coenzyme F420 biosynthesis. Its function is as follows. Catalyzes the transfer of the phosphoenolpyruvate moiety from enoylpyruvoyl-2-diphospho-5'-guanosine (EPPG) to 7,8-didemethyl-8-hydroxy-5-deazariboflavin (FO) with the formation of dehydro coenzyme F420-0 and GMP. This Streptomyces coelicolor (strain ATCC BAA-471 / A3(2) / M145) protein is Phosphoenolpyruvate transferase.